The chain runs to 228 residues: Urease accessory protein UreF (228 aa).

The protein belongs to the UreF family. In terms of assembly, ureD, UreF and UreG form a complex that acts as a GTP-hydrolysis-dependent molecular chaperone, activating the urease apoprotein by helping to assemble the nickel containing metallocenter of UreC. The UreE protein probably delivers the nickel.

It is found in the cytoplasm. In terms of biological role, required for maturation of urease via the functional incorporation of the urease nickel metallocenter. This Prochlorococcus marinus (strain MIT 9312) protein is Urease accessory protein UreF.